Reading from the N-terminus, the 292-residue chain is Large ribosomal subunit protein uL4 (292 aa).

Composition is skewed to basic and acidic residues over residues 1–33 (MVEVKKTTKTKSTEEKAPKITKATKEKTSDKTA) and 42–51 (KVSDKAESTP). Disordered regions lie at residues 1–59 (MVEV…VKTS) and 132–158 (GTHKVKNRAEVSGTGKKPWKQKGTGKA).

This sequence belongs to the universal ribosomal protein uL4 family. Part of the 50S ribosomal subunit.

Its function is as follows. One of the primary rRNA binding proteins, this protein initially binds near the 5'-end of the 23S rRNA. It is important during the early stages of 50S assembly. It makes multiple contacts with different domains of the 23S rRNA in the assembled 50S subunit and ribosome. Forms part of the polypeptide exit tunnel. In Mycoplasmopsis pulmonis (strain UAB CTIP) (Mycoplasma pulmonis), this protein is Large ribosomal subunit protein uL4.